Here is a 447-residue protein sequence, read N- to C-terminus: Trigger factor (447 aa).

The PPIase FKBP-type domain occupies 164–249 (GNQVTFDFEG…VKLVEKSKLP (86 aa)).

This sequence belongs to the FKBP-type PPIase family. Tig subfamily.

It is found in the cytoplasm. The catalysed reaction is [protein]-peptidylproline (omega=180) = [protein]-peptidylproline (omega=0). Functionally, involved in protein export. Acts as a chaperone by maintaining the newly synthesized protein in an open conformation. Functions as a peptidyl-prolyl cis-trans isomerase. This is Trigger factor from Psychrobacter cryohalolentis (strain ATCC BAA-1226 / DSM 17306 / VKM B-2378 / K5).